We begin with the raw amino-acid sequence, 218 residues long: Capsid protein (218 aa).

N-acetylmethionine; by host is present on Met-1. Residues 1 to 30 form a disordered region; that stretch reads MDKSESTSAGRNRRRRPRRGSRSAPSSSDA. Basic residues predominate over residues 11–21; the sequence is RNRRRRPRRGS.

Belongs to the cucumovirus capsid protein family.

The protein resides in the virion. In terms of biological role, capsid protein. Probably binds RNA and plays a role in packaging. The sequence is that of Capsid protein from Cucumis sativus (Cucumber).